Reading from the N-terminus, the 150-residue chain is 3-dehydroquinate dehydratase (150 aa).

The Proton acceptor role is filled by Tyr-26. Substrate contacts are provided by Asn-77, His-83, and Asp-90. The Proton donor role is filled by His-103. Residues Leu-104 to Ser-105 and Arg-114 contribute to the substrate site.

This sequence belongs to the type-II 3-dehydroquinase family. Homododecamer.

It catalyses the reaction 3-dehydroquinate = 3-dehydroshikimate + H2O. It functions in the pathway metabolic intermediate biosynthesis; chorismate biosynthesis; chorismate from D-erythrose 4-phosphate and phosphoenolpyruvate: step 3/7. Its function is as follows. Catalyzes a trans-dehydration via an enolate intermediate. The sequence is that of 3-dehydroquinate dehydratase from Vibrio cholerae serotype O1 (strain ATCC 39541 / Classical Ogawa 395 / O395).